A 147-amino-acid chain; its full sequence is UPF0306 protein YhbP (147 aa).

The protein belongs to the UPF0306 family.

This chain is UPF0306 protein YhbP, found in Shigella sonnei (strain Ss046).